A 206-amino-acid polypeptide reads, in one-letter code: Transcriptional regulator GfcR (206 aa).

It belongs to the purine/pyrimidine phosphoribosyltransferase family. GfcR subfamily.

This chain is Transcriptional regulator GfcR, found in Methanosphaerula palustris (strain ATCC BAA-1556 / DSM 19958 / E1-9c).